A 1548-amino-acid chain; its full sequence is Dual oxidase 2 (1548 aa).

The signal sequence occupies residues methionine 1–asparagine 25. The Extracellular portion of the chain corresponds to glutamine 26 to threonine 601. The peroxidase-like; mediates peroxidase activity stretch occupies residues serine 30 to proline 596. Residues asparagine 100, asparagine 348, asparagine 382, asparagine 455, and asparagine 537 are each glycosylated (N-linked (GlcNAc...) asparagine). Cysteine 124 and cysteine 1162 form a disulfide bridge. A helical membrane pass occupies residues isoleucine 602–phenylalanine 622. Residues arginine 623–histidine 1041 lie on the Cytoplasmic side of the membrane. 3 consecutive EF-hand domains span residues proline 819 to glycine 854, serine 855 to isoleucine 890, and glutamine 899 to glutamate 934. Ca(2+) contacts are provided by aspartate 832, aspartate 834, asparagine 836, tyrosine 838, glutamate 843, aspartate 868, aspartate 870, asparagine 872, and glutamate 879. The interaction with TXNDC11 stretch occupies residues isoleucine 960–threonine 1245. Residues proline 971–glycine 991 are disordered. A helical membrane pass occupies residues isoleucine 1042 to tyrosine 1062. The Extracellular segment spans residues tyrosine 1063 to threonine 1076. The chain crosses the membrane as a helical span at residues leucine 1077 to isoleucine 1097. The 183-residue stretch at arginine 1084–serine 1266 folds into the Ferric oxidoreductase domain. The Cytoplasmic segment spans residues leucine 1098–arginine 1128. A helical membrane pass occupies residues tryptophan 1129–isoleucine 1151. The Extracellular segment spans residues phenylalanine 1152–glutamine 1185. The helical transmembrane segment at threonine 1186–alanine 1206 threads the bilayer. The Cytoplasmic segment spans residues serine 1207 to histidine 1223. Helical transmembrane passes span leucine 1224–proline 1244 and threonine 1245–leucine 1265. Residues serine 1266–phenylalanine 1548 are Cytoplasmic-facing. The 107-residue stretch at arginine 1267 to glutamate 1373 folds into the FAD-binding FR-type domain.

It in the N-terminal section; belongs to the peroxidase family. Heterodimer with DUOXA2; disulfide-linked. Interacts with TXNDC11, TPO and CYBA. In terms of processing, N-glycosylated. As to expression, expressed in colon, small intestine, duodenum and tracheal surface epithelial cells (at protein level). Expressed in thyrocytes. Also detected in kidney, liver, lung, pancreas, prostate, salivary glands, rectum and testis.

The protein resides in the apical cell membrane. The protein localises to the cell junction. The catalysed reaction is NADH + O2 + H(+) = H2O2 + NAD(+). It carries out the reaction NADPH + O2 + H(+) = H2O2 + NADP(+). It participates in hormone biosynthesis; thyroid hormone biosynthesis. With respect to regulation, peroxidase activity is inhibited by aminobenzohydrazide. The NADPH oxidase activity is calcium-dependent. In terms of biological role, generates hydrogen peroxide which is required for the activity of thyroid peroxidase/TPO and lactoperoxidase/LPO. Plays a role in thyroid hormones synthesis and lactoperoxidase-mediated antimicrobial defense at the surface of mucosa. May have its own peroxidase activity through its N-terminal peroxidase-like domain. In Homo sapiens (Human), this protein is Dual oxidase 2 (DUOX2).